The chain runs to 348 residues: Dihydroorotase (348 aa).

Residues His-14 and His-16 each coordinate Zn(2+). Substrate contacts are provided by residues His-16–Arg-18 and Asn-42. Zn(2+)-binding residues include Lys-100, His-137, and His-175. Lys-100 bears the N6-carboxylysine mark. His-137 lines the substrate pocket. Leu-220 contacts substrate. A Zn(2+)-binding site is contributed by Asp-248. Asp-248 is a catalytic residue. Residues His-252 and Ala-264 each contribute to the substrate site.

The protein belongs to the metallo-dependent hydrolases superfamily. DHOase family. Class II DHOase subfamily. In terms of assembly, homodimer. The cofactor is Zn(2+).

It catalyses the reaction (S)-dihydroorotate + H2O = N-carbamoyl-L-aspartate + H(+). It functions in the pathway pyrimidine metabolism; UMP biosynthesis via de novo pathway; (S)-dihydroorotate from bicarbonate: step 3/3. Catalyzes the reversible cyclization of carbamoyl aspartate to dihydroorotate. This chain is Dihydroorotase, found in Pseudomonas fluorescens (strain ATCC BAA-477 / NRRL B-23932 / Pf-5).